Here is a 51-residue protein sequence, read N- to C-terminus: uncharacterized protein (51 aa).

The interval 1 to 51 (MKRKAEVNEAIKNNNTPTESMDPNSYKTQYHDDPNFRGANRNSKQGQQGGM) is disordered. 2 stretches are compositionally biased toward polar residues: residues 11–28 (IKNN…SYKT) and 40–51 (NRNSKQGQQGGM).

This is an uncharacterized protein from Bacillus subtilis (strain 168).